Here is a 251-residue protein sequence, read N- to C-terminus: MNGFTVVIPARMASSRLPGKPLADIAGKPMVVRVAEQAAKSRAARVVVATDHADILAACAAHGVEAVLTREDHASGTDRLAEVAAKLALPDDALVVNVQGDEPLIQPELINRLAELLAGADAPVATLAHALHDAADHFNPNVVKVALDKHGRALYFSRAPIPYARDAYAADRSALPAGLPVYRHIGMYGYRAGFLAAYAGLEPGPLEQYEALEQLRVLWHGYGIAVALADEAPAAGVDTPEDLERVRRLFA.

It belongs to the KdsB family.

The protein resides in the cytoplasm. The catalysed reaction is 3-deoxy-alpha-D-manno-oct-2-ulosonate + CTP = CMP-3-deoxy-beta-D-manno-octulosonate + diphosphate. It functions in the pathway nucleotide-sugar biosynthesis; CMP-3-deoxy-D-manno-octulosonate biosynthesis; CMP-3-deoxy-D-manno-octulosonate from 3-deoxy-D-manno-octulosonate and CTP: step 1/1. It participates in bacterial outer membrane biogenesis; lipopolysaccharide biosynthesis. Activates KDO (a required 8-carbon sugar) for incorporation into bacterial lipopolysaccharide in Gram-negative bacteria. This chain is 3-deoxy-manno-octulosonate cytidylyltransferase, found in Chromobacterium violaceum (strain ATCC 12472 / DSM 30191 / JCM 1249 / CCUG 213 / NBRC 12614 / NCIMB 9131 / NCTC 9757 / MK).